The primary structure comprises 255 residues: uncharacterized protein (255 aa).

A signal peptide spans 1–28 (MFKLNFKNNYKVLTLLFSLTLSMFVSNA). 3 N-linked (GlcNAc...) asparagine glycosylation sites follow: Asn-38, Asn-61, and Asn-83.

Its subcellular location is the secreted. This is an uncharacterized protein from Dictyostelium discoideum (Social amoeba).